The chain runs to 87 residues: Sec-independent protein translocase protein TatA (87 aa).

Residues 1–21 (MGSFSIWHWLIVLLIVVMVFG) form a helical membrane-spanning segment. A disordered region spans residues 40-87 (KDGMKDGSTPEGTPASTTAATPPAGQVTNQQAHAADPGTIDVEAKHKG). A compositionally biased stretch (low complexity) spans 46–64 (GSTPEGTPASTTAATPPAG).

Belongs to the TatA/E family. In terms of assembly, the Tat system comprises two distinct complexes: a TatABC complex, containing multiple copies of TatA, TatB and TatC subunits, and a separate TatA complex, containing only TatA subunits. Substrates initially bind to the TatABC complex, which probably triggers association of the separate TatA complex to form the active translocon.

Its subcellular location is the cell inner membrane. Functionally, part of the twin-arginine translocation (Tat) system that transports large folded proteins containing a characteristic twin-arginine motif in their signal peptide across membranes. TatA could form the protein-conducting channel of the Tat system. This chain is Sec-independent protein translocase protein TatA, found in Paracidovorax citrulli (strain AAC00-1) (Acidovorax citrulli).